Here is a 196-residue protein sequence, read N- to C-terminus: dITP/XTP pyrophosphatase (196 aa).

10–15 (TSNKGK) provides a ligand contact to substrate. D71 acts as the Proton acceptor in catalysis. D71 provides a ligand contact to Mg(2+). Substrate is bound by residues S72, 156-159 (FGYD), K179, and 184-185 (HR).

It belongs to the HAM1 NTPase family. Homodimer. Requires Mg(2+) as cofactor.

It carries out the reaction XTP + H2O = XMP + diphosphate + H(+). The enzyme catalyses dITP + H2O = dIMP + diphosphate + H(+). It catalyses the reaction ITP + H2O = IMP + diphosphate + H(+). Its function is as follows. Pyrophosphatase that catalyzes the hydrolysis of nucleoside triphosphates to their monophosphate derivatives, with a high preference for the non-canonical purine nucleotides XTP (xanthosine triphosphate), dITP (deoxyinosine triphosphate) and ITP. Seems to function as a house-cleaning enzyme that removes non-canonical purine nucleotides from the nucleotide pool, thus preventing their incorporation into DNA/RNA and avoiding chromosomal lesions. The polypeptide is dITP/XTP pyrophosphatase (Haemophilus ducreyi (strain 35000HP / ATCC 700724)).